A 261-amino-acid polypeptide reads, in one-letter code: tRNA pseudouridine synthase A (261 aa).

Asp53 serves as the catalytic Nucleophile. Tyr111 contributes to the substrate binding site.

Belongs to the tRNA pseudouridine synthase TruA family. As to quaternary structure, homodimer.

It carries out the reaction uridine(38/39/40) in tRNA = pseudouridine(38/39/40) in tRNA. Its function is as follows. Formation of pseudouridine at positions 38, 39 and 40 in the anticodon stem and loop of transfer RNAs. In Shouchella clausii (strain KSM-K16) (Alkalihalobacillus clausii), this protein is tRNA pseudouridine synthase A.